Reading from the N-terminus, the 142-residue chain is Protein archease (142 aa).

Ca(2+)-binding residues include D12, D141, and I142.

It belongs to the archease family.

Activates the tRNA-splicing ligase complex by facilitating the enzymatic turnover of catalytic subunit RtcB. Acts by promoting the guanylylation of RtcB, a key intermediate step in tRNA ligation. Can also alter the NTP specificity of RtcB such that ATP, dGTP or ITP is used efficiently. This Pyrococcus furiosus (strain ATCC 43587 / DSM 3638 / JCM 8422 / Vc1) protein is Protein archease.